Reading from the N-terminus, the 119-residue chain is Large ribosomal subunit protein bL20 (119 aa).

Belongs to the bacterial ribosomal protein bL20 family.

Its function is as follows. Binds directly to 23S ribosomal RNA and is necessary for the in vitro assembly process of the 50S ribosomal subunit. It is not involved in the protein synthesizing functions of that subunit. The protein is Large ribosomal subunit protein bL20 of Bacillus velezensis (strain DSM 23117 / BGSC 10A6 / LMG 26770 / FZB42) (Bacillus amyloliquefaciens subsp. plantarum).